A 453-amino-acid chain; its full sequence is UPF0210 protein MM_0081 (453 aa).

This sequence belongs to the UPF0210 family.

The protein is UPF0210 protein MM_0081 of Methanosarcina mazei (strain ATCC BAA-159 / DSM 3647 / Goe1 / Go1 / JCM 11833 / OCM 88) (Methanosarcina frisia).